The following is an 84-amino-acid chain: Tenecin-1 (84 aa).

Positions 1–19 (MKLTIFALVACFFILQIAA) are cleaved as a signal peptide. Residues 20–41 (FPLEEAATAEEIEQGEHIRVKR) constitute a propeptide that is removed on maturation. Intrachain disulfides connect cysteine 44–cysteine 75, cysteine 61–cysteine 81, and cysteine 65–cysteine 83.

Belongs to the invertebrate defensin family. Type 1 subfamily.

It is found in the secreted. Functionally, bactericidal protein produced in response to injury. It is cytotoxic to Gram-positive bacteria. This Tenebrio molitor (Yellow mealworm beetle) protein is Tenecin-1.